The sequence spans 598 residues: Elongation factor 4 (598 aa).

Positions 2 to 184 constitute a tr-type G domain; that stretch reads KNIRNFSIIA…EIVRCIPPPV (183 aa). GTP contacts are provided by residues 14–19 and 131–134; these read DHGKST and NKID.

It belongs to the TRAFAC class translation factor GTPase superfamily. Classic translation factor GTPase family. LepA subfamily.

The protein resides in the cell inner membrane. It catalyses the reaction GTP + H2O = GDP + phosphate + H(+). Its function is as follows. Required for accurate and efficient protein synthesis under certain stress conditions. May act as a fidelity factor of the translation reaction, by catalyzing a one-codon backward translocation of tRNAs on improperly translocated ribosomes. Back-translocation proceeds from a post-translocation (POST) complex to a pre-translocation (PRE) complex, thus giving elongation factor G a second chance to translocate the tRNAs correctly. Binds to ribosomes in a GTP-dependent manner. This Psychromonas ingrahamii (strain DSM 17664 / CCUG 51855 / 37) protein is Elongation factor 4.